A 91-amino-acid polypeptide reads, in one-letter code: Small ribosomal subunit protein bS16 (91 aa).

It belongs to the bacterial ribosomal protein bS16 family.

This chain is Small ribosomal subunit protein bS16, found in Staphylococcus epidermidis (strain ATCC 35984 / DSM 28319 / BCRC 17069 / CCUG 31568 / BM 3577 / RP62A).